The primary structure comprises 432 residues: Adenosylhomocysteinase (432 aa).

Thr-56, Asp-131, and Glu-156 together coordinate substrate. Residue 157 to 159 (TTT) coordinates NAD(+). Substrate contacts are provided by Lys-186 and Asp-190. Residues 222–227 (GDVGKG), Glu-243, Asn-248, 299–301 (IGH), Asn-346, His-353, Lys-426, 426–430 (KPDHY), and Tyr-430 contribute to the NAD(+) site.

It belongs to the adenosylhomocysteinase family. As to quaternary structure, interacts with AhcyL1; the interaction may negatively regulate Ahcy catalytic activity. NAD(+) is required as a cofactor.

It catalyses the reaction S-adenosyl-L-homocysteine + H2O = L-homocysteine + adenosine. It participates in amino-acid biosynthesis; L-homocysteine biosynthesis; L-homocysteine from S-adenosyl-L-homocysteine: step 1/1. Its function is as follows. Adenosylhomocysteine is a competitive inhibitor of S-adenosyl-L-methionine-dependent methyl transferase reactions; therefore adenosylhomocysteinase may play a key role in the control of methylations via regulation of the intracellular concentration of adenosylhomocysteine. The protein is Adenosylhomocysteinase of Drosophila melanogaster (Fruit fly).